Consider the following 1245-residue polypeptide: Nidogen-1 (1245 aa).

A signal peptide spans 1–28 (MLDASGCSWAMWTWALLQLLLLVGPGGC). The NIDO domain occupies 106–268 (PFLADLDTTD…GVWVFEIGSP (163 aa)). N187 is a glycosylation site (N-linked (GlcNAc...) asparagine). A sulfotyrosine mark is found at Y290 and Y295. O-linked (GalNAc...) threonine glycosylation occurs at T299. The disordered stretch occupies residues 307–344 (VATPSPSHSPRRGYPDPHNVPRILSPGYEATERPRGVP). A glycan (O-linked (GalNAc...) serine) is linked at S331. 2 O-linked (GalNAc...) threonine glycosylation sites follow: T337 and T345. O-linked (GalNAc...) threonine; partial glycosylation occurs at T348. An EGF-like 1 domain is found at 384 to 424 (SQQTCANNRHQCSVHAECRDYATGFCCRCVANYTGNGRQCV). 19 disulfides stabilise this stretch: C388-C401, C395-C410, C409-C616, C412-C423, C670-C683, C677-C693, C695-C706, C712-C725, C719-C734, C736-C748, C760-C775, C767-C785, C787-C798, C804-C815, C809-C824, C826-C837, C847-C876, C887-C894, and C896-C917. N415 is a glycosylation site (N-linked (GlcNAc...) asparagine). The Nidogen G2 beta-barrel domain occupies 428–665 (SPQRVNGKVK…GPVRDGSPDA (238 aa)). The EGF-like 2 domain occupies 666 to 707 (LQNPCYIGTHGCDSNAACRPGPGTQFTCECSIGFRGDGQTCY). The short motif at 700-702 (RGD) is the Cell attachment site element. Residues 708-749 (DIDECSEQPSRCGNHAVCNNLPGTFRCECVEGYHFSDRGTCV) form the EGF-like 3; calcium-binding domain. The region spanning 756–799 (PINYCETGLHNCDIPQRAQCIYMGGSSYTCSCLPGFSGDGRACR) is the EGF-like 4 domain. The EGF-like 5; calcium-binding domain maps to 800–838 (DVDECQHSRCHPDAFCYNTPGSFTCQCKPGYQGDGFRCM). Residues 844-917 (KTRCQLEREH…RTPPGMRPPC (74 aa)) form the Thyroglobulin type-1 domain. O-linked (GalNAc...) threonine glycans are attached at residues T920 and T933. 4 LDL-receptor class B repeats span residues 988 to 1030 (KVVY…DHLG), 1031 to 1073 (RTIF…DPVR), 1074 to 1118 (GNLY…DAFS), and 1119 to 1160 (SQLC…YGKN). In terms of domain architecture, EGF-like 6 spans 1206–1242 (GHNYCSVNNGGCTHLCLPTPGSRTCRCPDNTLGVDCI). Cystine bridges form between C1210–C1221, C1217–C1230, and C1232–C1241.

In terms of assembly, interacts with FBLN1. Interacts with LGALS3BP. Interacts with PLXDC1. Interacts with SVEP1. N- and O-glycosylated.

The protein localises to the secreted. Its subcellular location is the extracellular space. It is found in the extracellular matrix. The protein resides in the basement membrane. In terms of biological role, sulfated glycoprotein widely distributed in basement membranes and tightly associated with laminin. Also binds to collagen IV and perlecan. It probably has a role in cell-extracellular matrix interactions. In Mus musculus (Mouse), this protein is Nidogen-1 (Nid1).